The sequence spans 121 residues: UPF0344 protein BC_1150 (121 aa).

4 consecutive transmembrane segments (helical) span residues 6–26 (ITAW…YSAG), 38–58 (LMYI…VKTA), 65–85 (WYGL…MVLV), and 92–112 (PTGA…YLGL).

This sequence belongs to the UPF0344 family.

The protein localises to the cell membrane. The sequence is that of UPF0344 protein BC_1150 from Bacillus cereus (strain ATCC 14579 / DSM 31 / CCUG 7414 / JCM 2152 / NBRC 15305 / NCIMB 9373 / NCTC 2599 / NRRL B-3711).